The following is a 428-amino-acid chain: 4-hydroxy-3-methylbut-2-en-1-yl diphosphate synthase (flavodoxin) (428 aa).

Cys315, Cys318, Cys361, and Glu368 together coordinate [4Fe-4S] cluster.

The protein belongs to the IspG family. Requires [4Fe-4S] cluster as cofactor.

The enzyme catalyses (2E)-4-hydroxy-3-methylbut-2-enyl diphosphate + oxidized [flavodoxin] + H2O + 2 H(+) = 2-C-methyl-D-erythritol 2,4-cyclic diphosphate + reduced [flavodoxin]. It functions in the pathway isoprenoid biosynthesis; isopentenyl diphosphate biosynthesis via DXP pathway; isopentenyl diphosphate from 1-deoxy-D-xylulose 5-phosphate: step 5/6. Converts 2C-methyl-D-erythritol 2,4-cyclodiphosphate (ME-2,4cPP) into 1-hydroxy-2-methyl-2-(E)-butenyl 4-diphosphate. The chain is 4-hydroxy-3-methylbut-2-en-1-yl diphosphate synthase (flavodoxin) from Ralstonia pickettii (strain 12J).